The sequence spans 258 residues: Thiazole synthase (258 aa).

Lysine 100 (schiff-base intermediate with DXP) is an active-site residue. Residues glycine 161, 187–188, and 209–210 contribute to the 1-deoxy-D-xylulose 5-phosphate site; these read AG and NT.

This sequence belongs to the ThiG family. Homotetramer. Forms heterodimers with either ThiH or ThiS.

It localises to the cytoplasm. The catalysed reaction is [ThiS sulfur-carrier protein]-C-terminal-Gly-aminoethanethioate + 2-iminoacetate + 1-deoxy-D-xylulose 5-phosphate = [ThiS sulfur-carrier protein]-C-terminal Gly-Gly + 2-[(2R,5Z)-2-carboxy-4-methylthiazol-5(2H)-ylidene]ethyl phosphate + 2 H2O + H(+). It functions in the pathway cofactor biosynthesis; thiamine diphosphate biosynthesis. Its function is as follows. Catalyzes the rearrangement of 1-deoxy-D-xylulose 5-phosphate (DXP) to produce the thiazole phosphate moiety of thiamine. Sulfur is provided by the thiocarboxylate moiety of the carrier protein ThiS. In vitro, sulfur can be provided by H(2)S. This is Thiazole synthase from Campylobacter jejuni subsp. jejuni serotype O:23/36 (strain 81-176).